Reading from the N-terminus, the 1350-residue chain is Protein transport protein SEC16A homolog (1350 aa).

Disordered regions lie at residues 26-45, 73-97, 964-1063, 1118-1216, and 1235-1350; these read YTPT…GSDS, LGND…SIAP, MPPP…TRKV, AEEA…KPPI, and QVME…EVEL. A compositionally biased stretch (basic and acidic residues) spans 35 to 45; it reads KELKFDDGSDS. Serine 43 is subject to Phosphoserine. Positions 970–1002 are enriched in polar residues; that stretch reads HSTTGNPQVNEYQHQQQEAAKLSYSQSANTMSS. The segment covering 1150–1168 has biased composition (low complexity); it reads SPSSGSWSSGSPTPSENSP. Composition is skewed to polar residues over residues 1195 to 1210 and 1289 to 1316; these read TYNQ…PPVQ and RSGS…GSVN. The segment covering 1317–1343 has biased composition (low complexity); sequence SSSFMSPTSASTFRPSPLNSSSSSLGE.

This sequence belongs to the SEC16 family. As to quaternary structure, interacts with SEC13A, SEC13B and SEC31A.

The protein localises to the golgi apparatus. Its subcellular location is the golgi stack. It localises to the endoplasmic reticulum. Its function is as follows. Required for efficient protein export from the endoplasmic reticulum (ER) to the Golgi by regulating COPII coat dynamics at the ER. Functions as a scaffold and regulator of COPII coat assembly at ER exit sites. The protein is Protein transport protein SEC16A homolog of Arabidopsis thaliana (Mouse-ear cress).